Here is a 1170-residue protein sequence, read N- to C-terminus: Cellulose synthase-like protein D2 (1170 aa).

3 disordered regions span residues 1-48, 54-73, and 269-295; these read MASS…RRTH, SYSR…MSPE, and NEVD…EFTS. Over residues 10-24 the composition is skewed to low complexity; that stretch reads RHSNSSRLSRMSYSG. Residues 273–288 show a composition bias toward gly residues; sequence NGGGGGGGGGLGGGDG. A run of 2 helical transmembrane segments spans residues 311-331 and 341-361; these read VLSP…LFLA and AMWL…SWLL. Aspartate 441 is an active-site residue. A coiled-coil region spans residues 527–551; the sequence is HAREEIKAMKRQREAALDDVVEAVK. Aspartate 873 is an active-site residue. A run of 6 helical transmembrane segments spans residues 955–975, 981–1001, 1027–1047, 1070–1090, 1104–1124, and 1134–1154; these read IFLI…QFIV, TFLT…VLEI, LAAV…SFTL, SLMI…AVGF, LLGG…FAKG, and TIVF…WVAI.

It belongs to the glycosyltransferase 2 family. Plant cellulose synthase-like D subfamily.

The protein localises to the golgi apparatus membrane. Functionally, thought to be a Golgi-localized beta-glycan synthase that polymerize the backbones of noncellulosic polysaccharides (hemicelluloses) of plant cell wall. This chain is Cellulose synthase-like protein D2 (CSLD2), found in Oryza sativa subsp. japonica (Rice).